A 257-amino-acid polypeptide reads, in one-letter code: Synaptosomal-associated protein 29 (257 aa).

The segment at methionine 1–glutamine 42 is disordered. Residues threonine 20–proline 32 are compositionally biased toward basic and acidic residues. Residues serine 77, serine 78, serine 114, serine 163, serine 181, serine 203, and serine 209 each carry the phosphoserine modification. The t-SNARE coiled-coil homology domain maps to arginine 195–leucine 257.

Belongs to the SNAP-25 family. As to quaternary structure, forms a SNARE complex, composed of VAMP8, SNAP29 and STX17, involved in fusion of autophagosome with lysosome. Interacts with multiple syntaxins including STX6. Interacts with EIPR1. Interacts with STX17; this interaction is increased in the absence of TMEM39A. In terms of tissue distribution, widely expressed.

It is found in the cytoplasm. It localises to the golgi apparatus membrane. The protein localises to the cytoplasmic vesicle. The protein resides in the autophagosome membrane. Its subcellular location is the cell projection. It is found in the cilium membrane. Its function is as follows. SNAREs, soluble N-ethylmaleimide-sensitive factor-attachment protein receptors, are essential proteins for fusion of cellular membranes. SNAREs localized on opposing membranes assemble to form a trans-SNARE complex, an extended, parallel four alpha-helical bundle that drives membrane fusion. SNAP29 is a SNARE involved in autophagy through the direct control of autophagosome membrane fusion with the lysososome membrane. Also plays a role in ciliogenesis by regulating membrane fusions. This Rattus norvegicus (Rat) protein is Synaptosomal-associated protein 29.